We begin with the raw amino-acid sequence, 79 residues long: Cell division protein ZapB (79 aa).

Residues 4 to 78 (EVFEKLEAKV…LRALLGKMEE (75 aa)) adopt a coiled-coil conformation.

Belongs to the ZapB family. Homodimer. The ends of the coiled-coil dimer bind to each other, forming polymers. Interacts with FtsZ.

The protein localises to the cytoplasm. Non-essential, abundant cell division factor that is required for proper Z-ring formation. It is recruited early to the divisome by direct interaction with FtsZ, stimulating Z-ring assembly and thereby promoting cell division earlier in the cell cycle. Its recruitment to the Z-ring requires functional FtsA or ZipA. This chain is Cell division protein ZapB, found in Pectobacterium carotovorum subsp. carotovorum (strain PC1).